A 167-amino-acid polypeptide reads, in one-letter code: Translationally-controlled tumor protein homolog (167 aa).

Residues 1–167 (MIIFKDVISN…WKHGIKEEKI (167 aa)) form the TCTP domain.

It belongs to the TCTP family.

The protein resides in the cytoplasm. It localises to the cytoskeleton. Involved in protein synthesis. Involved in microtubule stabilization. This is Translationally-controlled tumor protein homolog from Yarrowia lipolytica (strain CLIB 122 / E 150) (Yeast).